The sequence spans 500 residues: MPTSRRALAGGALSMHVAYFLAISCLGYGLLGVLKVREPGAAPRRIDRFFTAVSAATVSSMSTVEMEVFSNGQLVVLTVLMLLGGEVFVSLVGLASKWSKLRSDAMDRSRRVESHGDVALADIDGGDVENPTSSGEEAASRRRPMDADTLRHNAVRALFYIVLAIFAVVHVVGAVAVAAYVLASPGARRTLGDKSLNTWTFAVFTTVSTFSNCGFMPTNENMVVFKRDAPLQLLLVPQVLAGNTLFAPLLAACVWAAAAATRREELVEMAREGGRAAAAGYAHLMPARRCWMLAATVAAFVAVLMALVCGMEWGGALQGMSPWEKVVNALFLAVNARHTGESTVDLSILAPAILVLFVLMMYLPPYTTWFPFEENSTTKDSNAENQGIRLLESTLLSQLSYLTIFVIAICITERRKLKEDPLNFSVLSIVVEVVSAYGNVGFSMGYSCSRQINPDHLCTDKWTGFVGRWSDSGKLILIFVMFFGRLKKFSMKGGKAWKLS.

The Cytoplasmic segment spans residues 1–12 (MPTSRRALAGGA). 2 helical membrane-spanning segments follow: residues 13–33 (LSMHVAYFLAISCLGYGLLGV) and 74–94 (LVVLTVLMLLGGEVFVSLVGL). The Cytoplasmic segment spans residues 95–156 (ASKWSKLRSD…ADTLRHNAVR (62 aa)). Residues 121–145 (ADIDGGDVENPTSSGEEAASRRRPM) form a disordered region. 2 helical membrane-spanning segments follow: residues 157 to 177 (ALFYIVLAIFAVVHVVGAVAV) and 239 to 259 (VLAGNTLFAPLLAACVWAAAA). Topologically, residues 260–290 (ATRREELVEMAREGGRAAAAGYAHLMPARRC) are cytoplasmic. Helical transmembrane passes span 291-311 (WMLAATVAAFVAVLMALVCGM) and 346-366 (LSILAPAILVLFVLMMYLPPY). Residues 367 to 390 (TTWFPFEENSTTKDSNAENQGIRL) are Cytoplasmic-facing. 2 consecutive transmembrane segments (helical) span residues 391 to 411 (LESTLLSQLSYLTIFVIAICI) and 464 to 484 (GFVGRWSDSGKLILIFVMFFG). Topologically, residues 485–500 (RLKKFSMKGGKAWKLS) are cytoplasmic.

The protein belongs to the TrkH potassium transport family. HKT (TC 2.A.38.3) subfamily.

Its subcellular location is the membrane. In terms of biological role, probable cation transporter. May be involved in regulation of potassium-sodium homeostasis. This is Probable cation transporter HKT1;4 from Oryza sativa subsp. japonica (Rice).